The primary structure comprises 196 residues: Ribonuclease HII (196 aa).

Positions 1-196 (MVTIGVDEAG…FAPVAQLQLL (196 aa)) constitute an RNase H type-2 domain. Residues aspartate 7, glutamate 8, and aspartate 103 each contribute to the a divalent metal cation site.

This sequence belongs to the RNase HII family. Requires Mn(2+) as cofactor. Mg(2+) is required as a cofactor.

The protein resides in the cytoplasm. The enzyme catalyses Endonucleolytic cleavage to 5'-phosphomonoester.. In terms of biological role, endonuclease that specifically degrades the RNA of RNA-DNA hybrids. The sequence is that of Ribonuclease HII from Novosphingobium aromaticivorans (strain ATCC 700278 / DSM 12444 / CCUG 56034 / CIP 105152 / NBRC 16084 / F199).